Reading from the N-terminus, the 1343-residue chain is DNA-directed RNA polymerase subunit beta (1343 aa).

Belongs to the RNA polymerase beta chain family. In terms of assembly, the RNAP catalytic core consists of 2 alpha, 1 beta, 1 beta' and 1 omega subunit. When a sigma factor is associated with the core the holoenzyme is formed, which can initiate transcription.

The catalysed reaction is RNA(n) + a ribonucleoside 5'-triphosphate = RNA(n+1) + diphosphate. Functionally, DNA-dependent RNA polymerase catalyzes the transcription of DNA into RNA using the four ribonucleoside triphosphates as substrates. This Shewanella piezotolerans (strain WP3 / JCM 13877) protein is DNA-directed RNA polymerase subunit beta.